The primary structure comprises 150 residues: MRCPYCTGESAVIDTRELDNGETIRRRRRCKHCDRRFTTYERVESVNVMVVKKNGDREPYDREKLLRGLRVAAYKRPISADVIDTLVTEVEAALIAYDALEVPSSVIGEQVMERLRSLDEVAYIRFASVYRSFSDLGKLREAVEELMEKE.

A zinc finger spans residues 3–33 (CPYCTGESAVIDTRELDNGETIRRRRRCKHC). One can recognise an ATP-cone domain in the interval 48–138 (VMVVKKNGDR…VYRSFSDLGK (91 aa)).

This sequence belongs to the NrdR family. Zn(2+) is required as a cofactor.

Its function is as follows. Negatively regulates transcription of bacterial ribonucleotide reductase nrd genes and operons by binding to NrdR-boxes. The protein is Transcriptional repressor NrdR of Herpetosiphon aurantiacus (strain ATCC 23779 / DSM 785 / 114-95).